The primary structure comprises 223 residues: MAEVKLLGFWYSPFSHRVEWALKIKGVKYEYIEEDRDNKSSLLLQSNPVYKKVPVLIHNGKPIVESMIILEYIDETFEGPSILPKDPYDRALARFWAKFLDDKVAAVVNTFFRKGEEQEKGKEEVYEMLKVLDNELKDKKFFAGDKFGFADIAANLVGFWLGVFEEGYGDVLVKSEKFPNFSKWRDEYINCSQVNESLPPRDELLAFFRARFQAVVASRSAPK.

Residues 2-81 (AEVKLLGFWY…YIDETFEGPS (80 aa)) form the GST N-terminal domain. Glutathione-binding positions include Ser12, Lys39, Val53, and 65–66 (ES). In terms of domain architecture, GST C-terminal spans 86-212 (DPYDRALARF…ELLAFFRARF (127 aa)).

Belongs to the GST superfamily. HSP26 family. In terms of tissue distribution, root tip-specific expression.

It catalyses the reaction RX + glutathione = an S-substituted glutathione + a halide anion + H(+). This chain is Probable glutathione S-transferase, found in Nicotiana tabacum (Common tobacco).